We begin with the raw amino-acid sequence, 304 residues long: Kazal-type serine protease inhibitor domain-containing protein 1 (304 aa).

An N-terminal signal peptide occupies residues 1–30; that stretch reads MLPPPRPAAALALPVLLLLLVVLTPPPTGA. Positions 49 to 129 constitute an IGFBP N-terminal domain; the sequence is EGEGCAPCRP…EVPEPLCACR (81 aa). Cystine bridges form between Cys53-Cys76, Cys56-Cys78, Cys61-Cys79, Cys67-Cys82, Cys90-Cys108, Cys102-Cys126, and Cys135-Cys168. A Kazal-like domain is found at 120–170; the sequence is EVPEPLCACRSQSPLCGSDGHTYSQICRLQEAARARPDANLTVAHPGPCES. Residues Asn159 and Asn183 are each glycosylated (N-linked (GlcNAc...) asparagine). Positions 172–269 constitute an Ig-like C2-type domain; sequence PQIVSHPYDT…GQVEAPASLT (98 aa). Cysteines 193 and 253 form a disulfide. Asn277 is a glycosylation site (N-linked (GlcNAc...) asparagine).

The protein resides in the secreted. It is found in the extracellular space. It localises to the extracellular matrix. Its function is as follows. Involved in the proliferation of osteoblasts during bone formation and bone regeneration. Promotes matrix assembly. The polypeptide is Kazal-type serine protease inhibitor domain-containing protein 1 (KAZALD1) (Homo sapiens (Human)).